A 486-amino-acid chain; its full sequence is Retrograde regulation protein 3 (486 aa).

A 9aaTAD 1 motif is present at residues 27-35 (ETLDFSLVT). 2 stretches are compositionally biased toward polar residues: residues 75–94 (NNNL…TAST) and 101–130 (SQSS…IGQG). The tract at residues 75 to 130 (NNNLMGSQARSNSQTPTASTIYEEAESQSSYLDDMFRTSQGGRPVTQNSISSIGQG) is disordered. Residues Ser-81, Ser-123, and Ser-142 each carry the phosphoserine modification. Thr-150 is subject to Phosphothreonine. A 9aaTAD 2 motif is present at residues 189–197 (SSINSDMMT). A phosphoserine mark is found at Ser-227, Ser-236, and Ser-241. Residues 243-274 (RHGSINTPRTRHTSISSNMTENIGPGSVPKIL) are disordered. The segment covering 246-263 (SINTPRTRHTSISSNMTE) has biased composition (polar residues). Ser-269 is modified (phosphoserine). The region spanning 285 to 344 (RKREFHNAVERRRRELIKQKIKELGQLVPPSLLNYDDLGKQIKPNKGIILDRTVEYLQYL) is the bHLH domain. The tract at residues 374 to 395 (ALSPFTNNHHASSGQNNSENSE) is disordered.

As to quaternary structure, binds DNA as a heterodimer with RTG1.

It is found in the nucleus. Its function is as follows. Transcription factor that regulates CIT2 gene expression. Binds to two identical sites oriented as inverted repeats 28 bp apart in a regulatory upstream activation sequence element (UASR) in the CIT2 promoter. The core binding site is 5'-GGTCAC-3'. In Saccharomyces cerevisiae (strain ATCC 204508 / S288c) (Baker's yeast), this protein is Retrograde regulation protein 3 (RTG3).